Reading from the N-terminus, the 491-residue chain is Cysteine--tRNA ligase (491 aa).

A Zn(2+)-binding site is contributed by Cys-29. Residues 31–41 carry the 'HIGH' region motif; the sequence is PTVYDFAHIGN. Cys-227, His-252, and Glu-256 together coordinate Zn(2+). Residues 285–289 carry the 'KMSKS' region motif; the sequence is KMSKS. ATP is bound at residue Lys-288.

This sequence belongs to the class-I aminoacyl-tRNA synthetase family. Monomer. Zn(2+) is required as a cofactor.

It localises to the cytoplasm. The catalysed reaction is tRNA(Cys) + L-cysteine + ATP = L-cysteinyl-tRNA(Cys) + AMP + diphosphate. The protein is Cysteine--tRNA ligase of Rhodopseudomonas palustris (strain TIE-1).